Reading from the N-terminus, the 67-residue chain is Large ribosomal subunit protein uL29 (67 aa).

This sequence belongs to the universal ribosomal protein uL29 family.

This Halalkalibacterium halodurans (strain ATCC BAA-125 / DSM 18197 / FERM 7344 / JCM 9153 / C-125) (Bacillus halodurans) protein is Large ribosomal subunit protein uL29 (rpmC).